We begin with the raw amino-acid sequence, 265 residues long: Eukaryotic translation initiation factor 3 subunit J (265 aa).

Disordered regions lie at residues 1-113 and 215-237; these read MPPS…DSDL and SNEK…AAKT. A compositionally biased stretch (acidic residues) spans 27–45; it reads DEEDGDVLDSWDAADDSEV. Residues 43 to 95 are a coiled coil; the sequence is SEVEREKAAKAAEAKAKAEAEAAANKKSKAQRIAEHKTRRKAAEDEEDDESDE. Residues 46–62 are compositionally biased toward basic and acidic residues; that stretch reads EREKAAKAAEAKAKAEA. The span at 86–97 shows a compositional bias: acidic residues; sequence EDEEDDESDEDE. Basic and acidic residues-rich tracts occupy residues 98 to 113 and 217 to 229; these read AEKR…DSDL and EKMK…DKGS.

Belongs to the eIF-3 subunit J family. Component of the eukaryotic translation initiation factor 3 (eIF-3) complex.

The protein localises to the cytoplasm. In terms of biological role, component of the eukaryotic translation initiation factor 3 (eIF-3) complex, which is involved in protein synthesis of a specialized repertoire of mRNAs and, together with other initiation factors, stimulates binding of mRNA and methionyl-tRNAi to the 40S ribosome. The eIF-3 complex specifically targets and initiates translation of a subset of mRNAs involved in cell proliferation. In Emericella nidulans (strain FGSC A4 / ATCC 38163 / CBS 112.46 / NRRL 194 / M139) (Aspergillus nidulans), this protein is Eukaryotic translation initiation factor 3 subunit J (hcr1).